The sequence spans 465 residues: Iron-sulfur cluster assembly SufBD family protein SAR0880 (465 aa).

This sequence belongs to the iron-sulfur cluster assembly SufBD family.

This Staphylococcus aureus (strain MRSA252) protein is Iron-sulfur cluster assembly SufBD family protein SAR0880.